A 721-amino-acid chain; its full sequence is BBSome complex member bbs-7 (721 aa).

Part of BBSome complex, that contains at least bbs-1, bbs-2, bbs-4, bbs-5, osm-12, bbs-8/ttc-8 and bbs-9. Interacts with bbs-1. Expressed in ciliated cells including amphid and both inner and outer labial neurons of the head and in both phasmid neurons PHA and PHB in the tail at larval stages L1 and L2.

It is found in the cell projection. The protein localises to the cilium. It localises to the cytoplasm. The protein resides in the cytoskeleton. Its subcellular location is the cilium basal body. It is found in the cilium axoneme. In terms of biological role, component of the BBSome complex. The BBSome complex is thought to function as a coat complex required for sorting of specific membrane proteins to the primary cilia. The BBSome complex is required for ciliogenesis but is dispensable for centriolar satellite function. Required for proper BBSome complex assembly and its ciliary localization. Required for cilia biogenesis and both the assembly and movement of intraflagellar transport proteins along the ciliary axoneme. Plays a role in the removal of degraded mechanosensory receptors within the cilia. Plays a role in guanylyl cyclase localization in the ring-like structures at the base of the finger compartment in AFD sensory neurons. In ciliated sensory neurons, required for the sensation of nitric oxide and avoidance of NO-producing organisms like P.aeruginosa. In Caenorhabditis elegans, this protein is BBSome complex member bbs-7.